A 571-amino-acid chain; its full sequence is MRTSQYLLATQKETPADAVVISHQLMLRAGMIRKLASGLYTWLPMGLRVMRKVEAVVREEMNAAGALEVLMPSIQPAELWQESGRWEQYGPELLRLKDRHQRDFCVGPTHEEVITDLARNELSSYKQLPLNMYQIQTKFRDEIRPRFGLMRGREFIMKDAYSFHADQASLQETYDRMHQAYSNIFTRLGLDFRPVQADTGSIGGSYSHEFHVLAESGEDDVIFSDSSDYAANIEKAEAIPRETARLAPTEELRLVDTPDAKTIAQLVENYGLPIEKTVKTLIVRGAEEGKLVALIVRGDHELNEIKAAKLEQVADPLVMATDAELREAIGAGAGSLGPLNLPLECIIDRSVALMSDFGIGANIDDKHYFGVNWERDLPVPQVADLRNVVEGDPSPDGQGTLVIKRGIEVGHIFQLGTKYSEALKCQVLGENGKPVVLSMGCYGIGVSRVVAAAIEQSYDDKGIIWNDALAPFQIALVPLRYETDVVREATDKLYAELTAAGFEVLLDDRDKKTSPGIKFADMELIGIPHRIVVSDRGLADGNLEYKHRTEQDAQALPLNEVLTFLQARVRR.

The protein belongs to the class-II aminoacyl-tRNA synthetase family. ProS type 1 subfamily. Homodimer.

It localises to the cytoplasm. The enzyme catalyses tRNA(Pro) + L-proline + ATP = L-prolyl-tRNA(Pro) + AMP + diphosphate. Its function is as follows. Catalyzes the attachment of proline to tRNA(Pro) in a two-step reaction: proline is first activated by ATP to form Pro-AMP and then transferred to the acceptor end of tRNA(Pro). As ProRS can inadvertently accommodate and process non-cognate amino acids such as alanine and cysteine, to avoid such errors it has two additional distinct editing activities against alanine. One activity is designated as 'pretransfer' editing and involves the tRNA(Pro)-independent hydrolysis of activated Ala-AMP. The other activity is designated 'posttransfer' editing and involves deacylation of mischarged Ala-tRNA(Pro). The misacylated Cys-tRNA(Pro) is not edited by ProRS. This is Proline--tRNA ligase from Pseudomonas putida (strain W619).